The chain runs to 159 residues: 3-dehydroquinate dehydratase (159 aa).

Tyr22 (proton acceptor) is an active-site residue. 3 residues coordinate substrate: Asn73, His79, and Asp86. The active-site Proton donor is the His99. Substrate is bound by residues Ile100–Ser101 and Arg110.

This sequence belongs to the type-II 3-dehydroquinase family. In terms of assembly, homododecamer.

The enzyme catalyses 3-dehydroquinate = 3-dehydroshikimate + H2O. It functions in the pathway metabolic intermediate biosynthesis; chorismate biosynthesis; chorismate from D-erythrose 4-phosphate and phosphoenolpyruvate: step 3/7. Catalyzes a trans-dehydration via an enolate intermediate. In Campylobacter jejuni subsp. doylei (strain ATCC BAA-1458 / RM4099 / 269.97), this protein is 3-dehydroquinate dehydratase.